Here is a 377-residue protein sequence, read N- to C-terminus: Putative holocytochrome-c synthase (377 aa).

2 disordered regions span residues 1-29 and 111-136; these read MTSS…SNEA and QNSE…KPAG. Positions 7–22 are enriched in basic and acidic residues; it reads TTDHPRTGKCPIDHSK. HRM repeat units lie at residues 114–119 and 124–129; these read EATPAV and TCPMSN.

This sequence belongs to the cytochrome c-type heme lyase family.

Its subcellular location is the mitochondrion inner membrane. The protein resides in the mitochondrion intermembrane space. It carries out the reaction holo-[cytochrome c] = apo-[cytochrome c] + heme b. Functionally, lyase that catalyzes the covalent linking of the heme group to the cytochrome C apoprotein to produce the mature functional cytochrome. The protein is Putative holocytochrome-c synthase of Schizosaccharomyces pombe (strain 972 / ATCC 24843) (Fission yeast).